The primary structure comprises 189 residues: Xanthine phosphoribosyltransferase (189 aa).

Xanthine-binding residues include Leu20 and Asn27. Position 127–131 (127–131 (AYGNA)) interacts with 5-phospho-alpha-D-ribose 1-diphosphate. Position 155 (Lys155) interacts with xanthine.

Belongs to the purine/pyrimidine phosphoribosyltransferase family. Xpt subfamily. In terms of assembly, homodimer.

The protein resides in the cytoplasm. The enzyme catalyses XMP + diphosphate = xanthine + 5-phospho-alpha-D-ribose 1-diphosphate. It functions in the pathway purine metabolism; XMP biosynthesis via salvage pathway; XMP from xanthine: step 1/1. Converts the preformed base xanthine, a product of nucleic acid breakdown, to xanthosine 5'-monophosphate (XMP), so it can be reused for RNA or DNA synthesis. The sequence is that of Xanthine phosphoribosyltransferase from Bacteroides fragilis (strain ATCC 25285 / DSM 2151 / CCUG 4856 / JCM 11019 / LMG 10263 / NCTC 9343 / Onslow / VPI 2553 / EN-2).